Reading from the N-terminus, the 252-residue chain is Imidazole glycerol phosphate synthase subunit HisF (252 aa).

Active-site residues include Asp11 and Asp130.

The protein belongs to the HisA/HisF family. Heterodimer of HisH and HisF.

The protein resides in the cytoplasm. It catalyses the reaction 5-[(5-phospho-1-deoxy-D-ribulos-1-ylimino)methylamino]-1-(5-phospho-beta-D-ribosyl)imidazole-4-carboxamide + L-glutamine = D-erythro-1-(imidazol-4-yl)glycerol 3-phosphate + 5-amino-1-(5-phospho-beta-D-ribosyl)imidazole-4-carboxamide + L-glutamate + H(+). It functions in the pathway amino-acid biosynthesis; L-histidine biosynthesis; L-histidine from 5-phospho-alpha-D-ribose 1-diphosphate: step 5/9. In terms of biological role, IGPS catalyzes the conversion of PRFAR and glutamine to IGP, AICAR and glutamate. The HisF subunit catalyzes the cyclization activity that produces IGP and AICAR from PRFAR using the ammonia provided by the HisH subunit. The polypeptide is Imidazole glycerol phosphate synthase subunit HisF (Staphylococcus aureus (strain USA300)).